The following is a 298-amino-acid chain: GTPase Era (298 aa).

An Era-type G domain is found at 3 to 170 (KSGFVAILGR…VQLLKDNLEE (168 aa)). Positions 11–18 (GRPNVGKS) are G1. 11-18 (GRPNVGKS) lines the GTP pocket. Positions 37–41 (QTTRN) are G2. The segment at 58 to 61 (DTPG) is G3. GTP is bound by residues 58–62 (DTPGI) and 120–123 (NKID). The segment at 120-123 (NKID) is G4. The interval 149–151 (ISA) is G5. The KH type-2 domain occupies 201–279 (TQQEVPHSVA…YLETWVKVKK (79 aa)).

The protein belongs to the TRAFAC class TrmE-Era-EngA-EngB-Septin-like GTPase superfamily. Era GTPase family. As to quaternary structure, monomer.

It is found in the cytoplasm. The protein resides in the cell membrane. Its function is as follows. An essential GTPase that binds both GDP and GTP, with rapid nucleotide exchange. Plays a role in 16S rRNA processing and 30S ribosomal subunit biogenesis and possibly also in cell cycle regulation and energy metabolism. This Streptococcus equi subsp. equi (strain 4047) protein is GTPase Era.